The following is a 294-amino-acid chain: tRNA dimethylallyltransferase (294 aa).

Residue 7–14 coordinates ATP; it reads GPTGSGKS. A substrate-binding site is contributed by 9–14; it reads TGSGKS.

The protein belongs to the IPP transferase family. As to quaternary structure, monomer. The cofactor is Mg(2+).

The enzyme catalyses adenosine(37) in tRNA + dimethylallyl diphosphate = N(6)-dimethylallyladenosine(37) in tRNA + diphosphate. Its function is as follows. Catalyzes the transfer of a dimethylallyl group onto the adenine at position 37 in tRNAs that read codons beginning with uridine, leading to the formation of N6-(dimethylallyl)adenosine (i(6)A). The polypeptide is tRNA dimethylallyltransferase (Akkermansia muciniphila (strain ATCC BAA-835 / DSM 22959 / JCM 33894 / BCRC 81048 / CCUG 64013 / CIP 107961 / Muc)).